A 374-amino-acid chain; its full sequence is Tetraacyldisaccharide 4'-kinase (374 aa).

ATP is bound at residue threonine 43–threonine 50.

Belongs to the LpxK family.

The catalysed reaction is a lipid A disaccharide + ATP = a lipid IVA + ADP + H(+). The protein operates within glycolipid biosynthesis; lipid IV(A) biosynthesis; lipid IV(A) from (3R)-3-hydroxytetradecanoyl-[acyl-carrier-protein] and UDP-N-acetyl-alpha-D-glucosamine: step 6/6. In terms of biological role, transfers the gamma-phosphate of ATP to the 4'-position of a tetraacyldisaccharide 1-phosphate intermediate (termed DS-1-P) to form tetraacyldisaccharide 1,4'-bis-phosphate (lipid IVA). The chain is Tetraacyldisaccharide 4'-kinase from Leptospira biflexa serovar Patoc (strain Patoc 1 / Ames).